The primary structure comprises 301 residues: Mas-related G-protein coupled receptor member A6 (301 aa).

The Extracellular segment spans residues 1 to 15; it reads MHRSISIRILITNLM. The helical transmembrane segment at 16–36 threads the bilayer; sequence IVILGLVGLTGNAIVFWLLLF. Residues 37-42 are Cytoplasmic-facing; the sequence is RLRRNA. A helical membrane pass occupies residues 43–63; the sequence is FSIYILNLALADFLFLLCHII. Over 64–77 the chain is Extracellular; it reads ASTEHILTFSSPNS. Residues 78 to 98 traverse the membrane as a helical segment; the sequence is IFINCLYTFRVLLYIAGLNML. Residues 99-128 are Cytoplasmic-facing; the sequence is SAISIERCLSVMCPIWYRCHRPEHTSTVMC. A helical membrane pass occupies residues 129–149; it reads AMIWVLSLLLCILYRYFCGFL. The Extracellular segment spans residues 150–163; it reads DTKYEDDYGCLAMN. A helical transmembrane segment spans residues 164–184; sequence FLTTAYLMFLFVVLCVSSLAL. The Cytoplasmic portion of the chain corresponds to 185–203; sequence LARLFCGAGRMKLTRLYVT. Residues 204–224 traverse the membrane as a helical segment; sequence ITLTLLVFLLCGLPCGFYWFL. The Extracellular portion of the chain corresponds to 225-240; the sequence is LSKIKNVFSVFEFSLY. A helical membrane pass occupies residues 241–261; it reads LTSVVLTAINSCANPIIYFFV. Residues 262-301 lie on the Cytoplasmic side of the membrane; it reads GSFRHRLKHQTLKMVLQSALQDTPETPENMVEMSRNKAEL.

The protein belongs to the G-protein coupled receptor 1 family. Mas subfamily. As to expression, expressed in a subset of sensory neurons that includes nociceptors. Expressed in the subclass of non-peptidergic sensory neurons that are IB4(+) and VR1(-).

The protein localises to the cell membrane. Orphan receptor. May be a receptor for RFamide-family neuropeptides such as NPFF and NPAF, which are analgesic in vivo. May regulate nociceptor function and/or development, including the sensation or modulation of pain. This chain is Mas-related G-protein coupled receptor member A6 (Mrgpra6), found in Mus musculus (Mouse).